The sequence spans 128 residues: MAHKFYRNYQPNNLIANSKVAKVAPLAGAALSMVGPNPLKKAPIPPLAYKVLATLEIELPNLGFCKLSVCMTDLMTSNGYTINHKAVPDNAPKIQSFHAGMSFLSSPRLLFIWLAINASYTKKYVPHP.

This is an uncharacterized protein from Saccharomyces cerevisiae (strain ATCC 204508 / S288c) (Baker's yeast).